The following is a 780-amino-acid chain: Chloride channel protein CLC-b (780 aa).

Residues 1–28 (MVEEDLNQIGGNSNYNGEGGDPESNTLN) form a disordered region. 12 helical membrane-spanning segments follow: residues 87 to 107 (TLACLVGLFTGLIATLINLAV), 130 to 150 (GLMVLVGANLGLTLVASVLCV), 177 to 197 (FGATTMIVKIVGSIGAVAAGL), 205 to 225 (LVHIGSCIASLLGQGGTDNHR), 247 to 267 (GSAAGVCAAFRSPVGGVLFAL), 277 to 297 (ALLWRTFFSTAVVVVVLREFI), 327 to 347 (VTDIIPVMLIGVIGGILGSLY), 370 to 390 (VLLSLTVSLFTSVCLYGLPFL), 452 to 472 (MGSLWIFFVLYCILGLFTFGI), 477 to 497 (GLFLPIILMGAAYGRMLGAAM), 509 to 529 (AVLGAAALMAGSMRMTVSLCV), and 530 to 550 (IFLELTNNLLLLPITMIVLLI). 2 CBS domains span residues 594 to 663 (AKPP…FLTE) and 708 to 770 (TNTT…AFPL). Residues 735-755 (HLLIVPKIQASGMCPVVGILT) traverse the membrane as a helical segment.

This sequence belongs to the chloride channel (TC 2.A.49) family. In terms of assembly, homodimer. Interacts with PP2A5. Broadly expressed in the plant.

The protein localises to the membrane. Voltage-gated chloride channel. The protein is Chloride channel protein CLC-b (CLC-B) of Arabidopsis thaliana (Mouse-ear cress).